Here is a 724-residue protein sequence, read N- to C-terminus: Propionyl-CoA carboxylase alpha chain, mitochondrial (724 aa).

The N-terminal 48 residues, 1-48 (MAGQWVRTVALLAARRHWRRSSQQQLLGTLKHAPVYSYQCLVVSRSLS), are a transit peptide targeting the mitochondrion. Residues 58-505 (TFDKILIANR…STKFLSDVYP (448 aa)) form the Biotin carboxylation domain. Lys61 carries the post-translational modification N6-acetyllysine; alternate. Lys61 carries the post-translational modification N6-succinyllysine; alternate. Lys115 carries the N6-succinyllysine modification. Lys146 is subject to N6-acetyllysine; alternate. Lys146 carries the post-translational modification N6-succinyllysine; alternate. Residue Lys150 is modified to N6-acetyllysine. Lys173 provides a ligand contact to ATP. Positions 177–374 (KLLAKRAKVN…LVQEMILVAK (198 aa)) constitute an ATP-grasp domain. Lys184 carries the N6-succinyllysine modification. Lys196 is modified (N6-acetyllysine; alternate). Lys196 bears the N6-succinyllysine; alternate mark. Residues 205 to 266 (AREI…PRHI), Glu257, and Asn292 each bind ATP. Ser248 bears the Phosphoserine mark. Lys258 is subject to N6-succinyllysine. Position 324 is an N6-acetyllysine; alternate (Lys324). The residue at position 324 (Lys324) is an N6-succinyllysine; alternate. 3 residues coordinate Mg(2+): Glu332, Glu345, and Asn347. The Mn(2+) site is built by Glu332, Glu345, and Asn347. The active site involves Arg349. An N6-succinyllysine mark is found at Lys381 and Lys403. Phe405 serves as a coordination point for biotin. Lys492 carries the post-translational modification N6-acetyllysine. Lys498, Lys509, Lys554, and Lys644 each carry N6-succinyllysine. The region spanning 645–724 (FMLEKVPKDT…GEGDLLVELE (80 aa)) is the Biotinyl-binding domain. An N6-biotinyllysine; by HLCS modification is found at Lys690.

In terms of assembly, the holoenzyme is a dodecamer composed of 6 PCCA/alpha subunits and 6 PCCB/beta subunits. Interacts (via the biotin carboxylation domain) with SIRT4. Interacts with SIRT3 and SIRT5. The cofactor is Mg(2+). Mn(2+) is required as a cofactor. Requires biotin as cofactor. In terms of processing, acetylated. Post-translationally, the biotin cofactor is covalently attached to the C-terminal biotinyl-binding domain and is required for the catalytic activity. Biotinylation is catalyzed by HLCS.

It localises to the mitochondrion matrix. The catalysed reaction is propanoyl-CoA + hydrogencarbonate + ATP = (S)-methylmalonyl-CoA + ADP + phosphate + H(+). It catalyses the reaction butanoyl-CoA + hydrogencarbonate + ATP = (2S)-ethylmalonyl-CoA + ADP + phosphate + H(+). It participates in metabolic intermediate metabolism; propanoyl-CoA degradation; succinyl-CoA from propanoyl-CoA: step 1/3. Its function is as follows. This is one of the 2 subunits of the biotin-dependent propionyl-CoA carboxylase (PCC), a mitochondrial enzyme involved in the catabolism of odd chain fatty acids, branched-chain amino acids isoleucine, threonine, methionine, and valine and other metabolites. Propionyl-CoA carboxylase catalyzes the carboxylation of propionyl-CoA/propanoyl-CoA to D-methylmalonyl-CoA/(S)-methylmalonyl-CoA. Within the holoenzyme, the alpha subunit catalyzes the ATP-dependent carboxylation of the biotin carried by the biotin carboxyl carrier (BCC) domain, while the beta subunit then transfers the carboxyl group from carboxylated biotin to propionyl-CoA. Propionyl-CoA carboxylase also significantly acts on butyryl-CoA/butanoyl-CoA, which is converted to ethylmalonyl-CoA/(2S)-ethylmalonyl-CoA. Other alternative minor substrates include (2E)-butenoyl-CoA/crotonoyl-CoA. The chain is Propionyl-CoA carboxylase alpha chain, mitochondrial from Mus musculus (Mouse).